The sequence spans 153 residues: SsrA-binding protein (153 aa).

The segment at 132 to 153 (REKDWLRERERVMKHDTRRRSD) is disordered.

It belongs to the SmpB family.

It is found in the cytoplasm. In terms of biological role, required for rescue of stalled ribosomes mediated by trans-translation. Binds to transfer-messenger RNA (tmRNA), required for stable association of tmRNA with ribosomes. tmRNA and SmpB together mimic tRNA shape, replacing the anticodon stem-loop with SmpB. tmRNA is encoded by the ssrA gene; the 2 termini fold to resemble tRNA(Ala) and it encodes a 'tag peptide', a short internal open reading frame. During trans-translation Ala-aminoacylated tmRNA acts like a tRNA, entering the A-site of stalled ribosomes, displacing the stalled mRNA. The ribosome then switches to translate the ORF on the tmRNA; the nascent peptide is terminated with the 'tag peptide' encoded by the tmRNA and targeted for degradation. The ribosome is freed to recommence translation, which seems to be the essential function of trans-translation. The polypeptide is SsrA-binding protein (Bordetella avium (strain 197N)).